Consider the following 479-residue polypeptide: Glycogen synthase (479 aa).

An ADP-alpha-D-glucose-binding site is contributed by K15.

Belongs to the glycosyltransferase 1 family. Bacterial/plant glycogen synthase subfamily.

It carries out the reaction [(1-&gt;4)-alpha-D-glucosyl](n) + ADP-alpha-D-glucose = [(1-&gt;4)-alpha-D-glucosyl](n+1) + ADP + H(+). It functions in the pathway glycan biosynthesis; glycogen biosynthesis. Synthesizes alpha-1,4-glucan chains using ADP-glucose. The polypeptide is Glycogen synthase (Histophilus somni (strain 129Pt) (Haemophilus somnus)).